Reading from the N-terminus, the 664-residue chain is Armadillo repeat protein involved in nucleocytoplasmic transport Syo2 (664 aa).

The ARM repeat unit spans residues 77-119 (GLVSKLIDRISDDSVEVVVEATGALRNLAIEEGYSICMDMYRK).

It belongs to the nuclear import and ribosome assembly adapter family. Forms a heterotrimeric complex with rpl5 and rpl11a or rpl11b; interaction of this complex with kap104 allows the nuclear import of the heterotrimer. Component of a hexameric 5S RNP precursor complex; this complex acts as a precursor for ribosome assembly.

It is found in the cytoplasm. Its subcellular location is the nucleus. Functionally, nuclear import adapter that specifically recruits the two functionally and topologically linked ribosomal proteins rpl5 and rpl11 (encoded by rpl11a and rpl11b). Guarantees that this cargo pair remains bound together from the time of synthesis in the cytoplasm until delivery to the nascent 5S rRNA in the nucleus. The polypeptide is Armadillo repeat protein involved in nucleocytoplasmic transport Syo2 (Schizosaccharomyces pombe (strain 972 / ATCC 24843) (Fission yeast)).